The sequence spans 445 residues: C4-dicarboxylate transport protein (445 aa).

The next 8 helical transmembrane spans lie at 24-44, 62-82, 105-125, 163-183, 201-221, 237-257, 322-342, and 370-390; these read VLYVQVLIAIVLGVLLGWVSP, LIKMVIAPIIFCTVVSGIAHI, FALILGLIVGNLVPVGHGLAA, GDILQVLLFAILFGFALMALG, FGVIAIVMKAAPVGAFGAMAF, LVALFYATAALFVFVVLGLIA, IYMTLATLFIAQALGIELTFT, and AGTLAAVNPALVPGMAIVFSI.

The protein belongs to the dicarboxylate/amino acid:cation symporter (DAACS) (TC 2.A.23) family.

It is found in the cell inner membrane. In terms of biological role, responsible for the transport of dicarboxylates such as succinate, fumarate, and malate from the periplasm across the membrane. The sequence is that of C4-dicarboxylate transport protein from Rhodopseudomonas palustris (strain BisB5).